We begin with the raw amino-acid sequence, 177 residues long: Ribonuclease H (177 aa).

Residues 1–142 (MSKQVEIFTD…ADELAREGMA (142 aa)) enclose the RNase H type-1 domain. Residues Asp-10, Glu-48, Asp-70, and Asp-134 each contribute to the Mg(2+) site. Basic and acidic residues predominate over residues 126-138 (GHTENERADELAR). The interval 126-177 (GHTENERADELAREGMAPFKKGSFKPAASAPKPDAQLKQPVATKARRSTQSY) is disordered.

This sequence belongs to the RNase H family. As to quaternary structure, monomer. The cofactor is Mg(2+).

Its subcellular location is the cytoplasm. It catalyses the reaction Endonucleolytic cleavage to 5'-phosphomonoester.. In terms of biological role, endonuclease that specifically degrades the RNA of RNA-DNA hybrids. In Mesorhizobium japonicum (strain LMG 29417 / CECT 9101 / MAFF 303099) (Mesorhizobium loti (strain MAFF 303099)), this protein is Ribonuclease H.